The primary structure comprises 983 residues: Probable beta-galactosidase C (983 aa).

Positions 1 to 23 (MRIFSFLFLLLLGILTGQGLVSG) are cleaved as a signal peptide. Residues Y82, N127, A128, E129, and N187 each coordinate substrate. E188 (proton donor) is an active-site residue. N197 is a glycosylation site (N-linked (GlcNAc...) asparagine). Position 251 (Y251) interacts with substrate. The cysteines at positions 257 and 304 are disulfide-linked. N276 carries an N-linked (GlcNAc...) asparagine glycan. E287 acts as the Nucleophile in catalysis. Residue Y353 participates in substrate binding. N391, N434, N466, N516, N601, N676, N714, N719, N758, and N804 each carry an N-linked (GlcNAc...) asparagine glycan.

This sequence belongs to the glycosyl hydrolase 35 family.

Its subcellular location is the secreted. The catalysed reaction is Hydrolysis of terminal non-reducing beta-D-galactose residues in beta-D-galactosides.. In terms of biological role, cleaves beta-linked terminal galactosyl residues from gangliosides, glycoproteins, and glycosaminoglycans. The polypeptide is Probable beta-galactosidase C (lacC) (Aspergillus fumigatus (strain CBS 144.89 / FGSC A1163 / CEA10) (Neosartorya fumigata)).